Consider the following 269-residue polypeptide: Gene 51 glycoprotein (269 aa).

N-linked (GlcNAc...) asparagine; by host glycosylation is found at Asn53, Asn58, Asn74, and Asn78. 2 disordered regions span residues 67–87 (LSTSPMHNATSNTSYSQTTPY) and 103–137 (MLNSTPNKPLSSTKLTPKSQSSSQSTKTTKQASKN). Low complexity predominate over residues 76–87 (TSNTSYSQTTPY). Positions 103–112 (MLNSTPNKPL) are enriched in polar residues. Residues 113–136 (SSTKLTPKSQSSSQSTKTTKQASK) show a composition bias toward low complexity. N-linked (GlcNAc...) asparagine; by host glycosylation is found at Asn137, Asn161, Asn170, and Asn191.

This is Gene 51 glycoprotein (51) from Saimiriine herpesvirus 2 (strain 11) (SaHV-2).